Here is a 267-residue protein sequence, read N- to C-terminus: Dolichol-phosphate mannosyltransferase (267 aa).

S2 is subject to N-acetylserine. Over 2–238 (SIEYSVIVPA…QQLKELYVFK (237 aa)) the chain is Cytoplasmic. Residues P10, Y12, E14, V42, D44, D95, A96, D97, Q99, and R122 each coordinate GDP-alpha-D-mannose. Mg(2+) contacts are provided by D97 and Q99. Residues D97 and Q99 each coordinate Mn(2+). Position 141 is a phosphoserine; by PKA (S141). Positions 183, 212, and 218 each coordinate GDP-alpha-D-mannose. The chain crosses the membrane as a helical; Anchor for type IV membrane protein span at residues 239–259 (FGANNLILFITFWSILFFYVC). The Lumenal portion of the chain corresponds to 260–267 (YQLYHLVF).

It belongs to the glycosyltransferase 2 family. Interacts with the C-terminus of SAC1, thereby sequestering it to the endoplasmic reticulum in exponentially growing cells. Under nutrient limitation conditions, this interaction is rapidly abolished. It depends on Mg(2+) as a cofactor. Mn(2+) serves as cofactor. The cofactor is Ca(2+).

It is found in the endoplasmic reticulum membrane. It carries out the reaction a di-trans,poly-cis-dolichyl phosphate + GDP-alpha-D-mannose = a di-trans,poly-cis-dolichyl beta-D-mannosyl phosphate + GDP. The protein operates within protein modification; protein glycosylation. Its activity is regulated as follows. Inhibited by acetylsalicylic acid (aspirin). Functionally, transfers mannose from GDP-mannose to dolichol monophosphate to form dolichol phosphate mannose (Dol-P-Man) which is the mannosyl donor in pathways leading to N-glycosylation, glycosyl phosphatidylinositol membrane anchoring, and O-mannosylation of proteins. The chain is Dolichol-phosphate mannosyltransferase from Saccharomyces cerevisiae (strain ATCC 204508 / S288c) (Baker's yeast).